The primary structure comprises 339 residues: Putative agmatine deiminase (339 aa).

The active-site Amidino-cysteine intermediate is Cys331.

The protein belongs to the agmatine deiminase family.

The enzyme catalyses agmatine + H2O = N-carbamoylputrescine + NH4(+). In Streptomyces coelicolor (strain ATCC BAA-471 / A3(2) / M145), this protein is Putative agmatine deiminase.